Reading from the N-terminus, the 516-residue chain is L-amino-acid oxidase (516 aa).

An N-terminal signal peptide occupies residues 1 to 18 (MNVFFMFSLLFLAALGSC). A disulfide bridge connects residues Cys28 and Cys191. FAD is bound by residues 61–62 (MS), 81–82 (EA), Arg89, and 105–108 (GPMR). Arg108 contributes to the substrate binding site. An N-linked (GlcNAc...) asparagine glycan is attached at Asn190. Residue His241 participates in substrate binding. Val279 lines the FAD pocket. Cys349 and Cys430 form a disulfide bridge. Asn379 carries N-linked (GlcNAc...) asparagine glycosylation. Tyr390 provides a ligand contact to substrate. Residues Glu475, 481-486 (HGWIDS), and 482-487 (GWIDSS) each bind FAD. Substrate contacts are provided by residues 481–482 (HG) and 482–483 (GW).

This sequence belongs to the flavin monoamine oxidase family. FIG1 subfamily. Homodimer; non-covalently linked. FAD is required as a cofactor. Post-translationally, N-glycosylated. Expressed by the venom gland.

It localises to the secreted. It carries out the reaction an L-alpha-amino acid + O2 + H2O = a 2-oxocarboxylate + H2O2 + NH4(+). In terms of biological role, catalyzes an oxidative deamination of predominantly hydrophobic and aromatic L-amino acids, thus producing hydrogen peroxide that may contribute to the diverse toxic effects of this enzyme. Exhibits diverse biological activities, such as hemorrhage, hemolysis, edema, apoptosis of vascular endothelial cells or tumor cell lines, antibacterial and antiparasitic activities, as well as regulation of platelet aggregation. Effects of snake L-amino oxidases on platelets are controversial, since they either induce aggregation or inhibit agonist-induced aggregation. These different effects are probably due to different experimental conditions. Displays dose-dependent inhibition on HIV-1 infection and replication. The chain is L-amino-acid oxidase from Trimeresurus stejnegeri (Chinese green tree viper).